The chain runs to 400 residues: MKHIILCIHFLLMVVGLGQAQDCSVAPNMRVNCGYPTVTEADCRAVGCCFDSSILNTKWCFYNATAGPIKKLECSGDPTKRIDCGFPRITEKQCILRGCCFDSSISGVKWCYARTVITTPAPDTTTASTTAETTTVPTTPETTTVPTTPETTTVPTTPETTTVPTTPETTTVPTTPETTTVPTTPETTTVPTTPETTTVPTTPETTTVPTTPETTTVPTTPETTTVPTTPETTTASTTAETTTVPTTPETTTEPTTTPTTDTTPPTLPPTPETTTETTTETTTETTTETTTETTTETTTAPPPECAADRVDCGYSGITQADCEGKGCIFDSTIPETKWCFYTEAEAPARKAECTVDPSVRTDCGYPGITDKECREKGCCYDECIPDVIWCFEKAVPVVNS.

Residues 1–20 (MKHIILCIHFLLMVVGLGQA) form the signal peptide. P-type domains are found at residues 21–64 (QDCS…FYNA) and 72–115 (LECS…YART). Cystine bridges form between C23–C49, C33–C48, and C43–C60. N63 carries an N-linked (GlcNAc...) asparagine glycan. 3 disulfide bridges follow: C74/C100, C84/C99, and C94/C111. Low complexity-rich tracts occupy residues 122–264 (PDTT…DTTP) and 272–299 (ETTTETTTETTTETTTETTTETTTETTT). The tract at residues 122–302 (PDTTTASTTA…TTTETTTAPP (181 aa)) is disordered. A run of 14 repeats spans residues 127–135 (ASTTAETTT), 136–144 (VPTTPETTT), 145–153 (VPTTPETTT), 154–162 (VPTTPETTT), 163–171 (VPTTPETTT), 172–180 (VPTTPETTT), 181–189 (VPTTPETTT), 190–198 (VPTTPETTT), 199–207 (VPTTPETTT), 208–216 (VPTTPETTT), 217–225 (VPTTPETTT), 226–234 (VPTTPETTT), 235–243 (ASTTAETTT), and 244–252 (VPTTPETTT). Residues 127 to 261 (ASTTAETTTV…TEPTTTPTTD (135 aa)) form a 15 X 9 AA approximate tandem repeats of [AV]-[SP]-T-T-[AP]-E-T-T-T region. The 1-15; approximate repeat unit spans residues 253–261 (EPTTTPTTD). 7 consecutive repeat copies span residues 272-275 (ETTT), 276-279 (ETTT), 280-283 (ETTT), 284-287 (ETTT), 288-291 (ETTT), 292-295 (ETTT), and 296-299 (ETTT). Residues 272–299 (ETTTETTTETTTETTTETTTETTTETTT) are 7 X 4 AA repeats of E-T-T-T. P-type domains follow at residues 298–343 (TTAP…FYTE) and 351–394 (AECT…FEKA). Intrachain disulfides connect C312-C327, C322-C339, C353-C379, C363-C378, and C373-C390.

Extensively O-glycosylated. Consist of about 70% carbohydrate and 30% protein. As to expression, expressed and stored exclusively in mature mucous glands of the skin.

Its subcellular location is the secreted. Its function is as follows. Could be involved in defense against microbial infections. Protects the epithelia from external environment. The polypeptide is Integumentary mucin A.1 (Xenopus laevis (African clawed frog)).